The following is a 378-amino-acid chain: Branched-chain-amino-acid aminotransferase (378 aa).

Lysine 213 is subject to N6-(pyridoxal phosphate)lysine.

Belongs to the class-IV pyridoxal-phosphate-dependent aminotransferase family. As to quaternary structure, homodimer. It depends on pyridoxal 5'-phosphate as a cofactor.

The catalysed reaction is L-leucine + 2-oxoglutarate = 4-methyl-2-oxopentanoate + L-glutamate. The enzyme catalyses L-isoleucine + 2-oxoglutarate = (S)-3-methyl-2-oxopentanoate + L-glutamate. It carries out the reaction L-valine + 2-oxoglutarate = 3-methyl-2-oxobutanoate + L-glutamate. In terms of biological role, catalyzes the first reaction in the catabolism of the essential branched chain amino acids leucine, isoleucine, and valine. This Dictyostelium discoideum (Social amoeba) protein is Branched-chain-amino-acid aminotransferase (bcaA).